A 104-amino-acid polypeptide reads, in one-letter code: MCWVGENIEKTTKINYRYDDVNKVLDKINSCIVDKYNANKYVLCTHEILLKKKVSLHRYLIAVSDADDLTPEILDYLKFNYPDVKVLTELPESADKLNKIIENN.

This sequence belongs to the mimivirus L28/L54 family.

This is an uncharacterized protein from Acanthamoeba polyphaga mimivirus (APMV).